The chain runs to 434 residues: Beta-enolase (434 aa).

Residue Ala-2 is modified to N-acetylalanine. Thr-72 carries the post-translational modification Phosphothreonine. Phosphoserine occurs at positions 83 and 157. Residues His-158 and Glu-167 each contribute to the substrate site. Residue Ser-176 is modified to Phosphoserine. Phosphothreonine is present on Thr-205. The active-site Proton donor is Glu-210. The residue at position 229 (Thr-229) is a Phosphothreonine. Tyr-236 carries the phosphotyrosine modification. Asp-245 is a binding site for Mg(2+). Ser-263 carries the post-translational modification Phosphoserine. Residues Glu-293 and Asp-318 each contribute to the substrate site. Positions 293 and 318 each coordinate Mg(2+). The active-site Proton acceptor is Lys-343. Substrate-binding positions include 370–373 (SHRS) and Lys-394.

The protein belongs to the enolase family. As to quaternary structure, mammalian enolase is composed of 3 isozyme subunits, alpha, beta and gamma, which can form homodimers or heterodimers which are cell-type and development-specific. Interacts with PNKD. Requires Mg(2+) as cofactor. As to expression, the alpha/alpha homodimer is expressed in embryo and in most adult tissues. The alpha/beta heterodimer and the beta/beta homodimer are found in striated muscle, and the alpha/gamma heterodimer and the gamma/gamma homodimer in neurons.

Its subcellular location is the cytoplasm. It catalyses the reaction (2R)-2-phosphoglycerate = phosphoenolpyruvate + H2O. It functions in the pathway carbohydrate degradation; glycolysis; pyruvate from D-glyceraldehyde 3-phosphate: step 4/5. Its function is as follows. Glycolytic enzyme that catalyzes the conversion of 2-phosphoglycerate to phosphoenolpyruvate. Appears to have a function in striated muscle development and regeneration. In Rattus norvegicus (Rat), this protein is Beta-enolase (Eno3).